A 124-amino-acid polypeptide reads, in one-letter code: Small ribosomal subunit protein uS12c (124 aa).

The interval 1-28 (MPTFQQLVRSARKPHAKKTKSPALQGCP) is disordered. Basic residues predominate over residues 10–20 (SARKPHAKKTK).

The protein belongs to the universal ribosomal protein uS12 family. As to quaternary structure, part of the 30S ribosomal subunit.

It is found in the plastid. With S4 and S5 plays an important role in translational accuracy. Located at the interface of the 30S and 50S subunits. This chain is Small ribosomal subunit protein uS12c (rps12), found in Prototheca wickerhamii.